The following is a 463-amino-acid chain: Asparagine--tRNA ligase (463 aa).

It belongs to the class-II aminoacyl-tRNA synthetase family. As to quaternary structure, homodimer.

It is found in the cytoplasm. The catalysed reaction is tRNA(Asn) + L-asparagine + ATP = L-asparaginyl-tRNA(Asn) + AMP + diphosphate + H(+). The sequence is that of Asparagine--tRNA ligase from Clostridium botulinum (strain Langeland / NCTC 10281 / Type F).